The sequence spans 77 residues: U11-lycotoxin-Ls1a (77 aa).

An N-terminal signal peptide occupies residues 1 to 20 (MKLIILTGLVLFAIVSFIEA). Residues 21–26 (EEETGR) constitute a propeptide that is removed on maturation.

This sequence belongs to the neurotoxin 19 (CSTX) family. 10 (U11-Lctx) subfamily. Post-translationally, contains 4 disulfide bonds. In terms of tissue distribution, expressed by the venom gland.

It localises to the secreted. This is U11-lycotoxin-Ls1a from Lycosa singoriensis (Wolf spider).